A 564-amino-acid polypeptide reads, in one-letter code: Alpha-farnesene synthase (564 aa).

Asp313, Asp317, Thr464, and Glu468 together coordinate Mg(2+). The DDXXD motif signature appears at 313 to 317; it reads DDVYD.

Belongs to the terpene synthase family. Mg(2+) serves as cofactor.

The enzyme catalyses (2E,6E)-farnesyl diphosphate = (3E,6E)-alpha-farnesene + diphosphate. In terms of biological role, catalyzes the cyclization of farnesyl diphosphate to (E,E)-alpha-farnesene. The protein is Alpha-farnesene synthase (TPS7) of Ricinus communis (Castor bean).